Here is a 173-residue protein sequence, read N- to C-terminus: Putative metal-dependent hydrolase OB0413 (173 aa).

Zn(2+) contacts are provided by H64, H155, and H159.

This sequence belongs to the metal hydrolase YfiT family. In terms of assembly, homodimer. Zn(2+) is required as a cofactor.

The protein localises to the cytoplasm. Functionally, possible metal-dependent hydrolase. The protein is Putative metal-dependent hydrolase OB0413 of Oceanobacillus iheyensis (strain DSM 14371 / CIP 107618 / JCM 11309 / KCTC 3954 / HTE831).